The primary structure comprises 313 residues: Protein FixB (313 aa).

255–283 (LYLAVGISGQIQHMVGANASQTIFAINKD) lines the FAD pocket.

It belongs to the ETF alpha-subunit/FixB family. As to quaternary structure, heterodimer of FixA and FixB.

The protein operates within amine and polyamine metabolism; carnitine metabolism. Its function is as follows. Required for anaerobic carnitine reduction. May bring reductant to CaiA. The polypeptide is Protein FixB (Escherichia coli O8 (strain IAI1)).